The primary structure comprises 114 residues: NADH-ubiquinone oxidoreductase chain 3 (114 aa).

The next 3 membrane-spanning stretches (helical) occupy residues 4-24 (LVYI…SYLL), 55-75 (FYLI…ILPF), and 82-102 (VSLL…IGFI).

Belongs to the complex I subunit 3 family.

It localises to the mitochondrion membrane. It catalyses the reaction a ubiquinone + NADH + 5 H(+)(in) = a ubiquinol + NAD(+) + 4 H(+)(out). Functionally, core subunit of the mitochondrial membrane respiratory chain NADH dehydrogenase (Complex I) that is believed to belong to the minimal assembly required for catalysis. Complex I functions in the transfer of electrons from NADH to the respiratory chain. The immediate electron acceptor for the enzyme is believed to be ubiquinone. This chain is NADH-ubiquinone oxidoreductase chain 3 (ND3), found in Allomyces macrogynus.